Here is a 144-residue protein sequence, read N- to C-terminus: Large ribosomal subunit protein eL27 (144 aa).

In terms of domain architecture, KOW spans 6–43 (IKPGRLVILLNGKYAGRKAVVIKTFDDATASKSRPYGH).

The protein belongs to the eukaryotic ribosomal protein eL27 family.

This Dictyostelium discoideum (Social amoeba) protein is Large ribosomal subunit protein eL27 (rpl27).